A 211-amino-acid polypeptide reads, in one-letter code: Protein-L-isoaspartate O-methyltransferase (211 aa).

Residue Ser-62 is part of the active site.

It belongs to the methyltransferase superfamily. L-isoaspartyl/D-aspartyl protein methyltransferase family.

It localises to the cytoplasm. The catalysed reaction is [protein]-L-isoaspartate + S-adenosyl-L-methionine = [protein]-L-isoaspartate alpha-methyl ester + S-adenosyl-L-homocysteine. Catalyzes the methyl esterification of L-isoaspartyl residues in peptides and proteins that result from spontaneous decomposition of normal L-aspartyl and L-asparaginyl residues. It plays a role in the repair and/or degradation of damaged proteins. In Shewanella piezotolerans (strain WP3 / JCM 13877), this protein is Protein-L-isoaspartate O-methyltransferase.